The primary structure comprises 205 residues: Outer-membrane lipoprotein carrier protein (205 aa).

The N-terminal stretch at 1–22 is a signal peptide; the sequence is MKKIVIVISILLTSFLSSAVSA.

Belongs to the LolA family. As to quaternary structure, monomer.

The protein localises to the periplasm. Participates in the translocation of lipoproteins from the inner membrane to the outer membrane. Only forms a complex with a lipoprotein if the residue after the N-terminal Cys is not an aspartate (The Asp acts as a targeting signal to indicate that the lipoprotein should stay in the inner membrane). The protein is Outer-membrane lipoprotein carrier protein of Psychromonas ingrahamii (strain DSM 17664 / CCUG 51855 / 37).